A 2327-amino-acid chain; its full sequence is Acetyl-CoA carboxylase 2 (2327 aa).

Positions 1 to 62 (MTSTHVATLG…NGGVSDSKKL (62 aa)) are disordered. Residues 134-641 (PIHSVLVANN…HTGWLDTRIA (508 aa)) form the Biotin carboxylation domain. Residues 287-481 (ECCLDSIPDE…AAQVAVGMGI (195 aa)) enclose the ATP-grasp domain. 313-370 (CQVVGYPAMIKASWGGGGKGIRKVHNDDEVRTLFKQVQGEVPGSPIFIMRLAAQSRHL) is an ATP binding site. Mg(2+)-binding residues include glutamate 436, glutamate 450, and asparagine 452. Glutamate 436, glutamate 450, and asparagine 452 together coordinate Mn(2+). Arginine 454 is an active-site residue. Residues 768–842 (LQNDHDPSKL…QAGDLIARLD (75 aa)) form the Biotinyl-binding domain. Lysine 809 is modified (N6-biotinyllysine). The 342-residue stretch at 1568–1909 (PYQPLSVIDL…YIGGPLPVTT (342 aa)) folds into the CoA carboxyltransferase N-terminal domain. The interval 1568–2227 (PYQPLSVIDL…EDVLAKEIRA (660 aa)) is carboxyltransferase. CoA-binding residues include arginine 1818, lysine 2119, and arginine 2121. The 315-residue stretch at 1913 to 2227 (PPDRPVAYIP…EDVLAKEIRA (315 aa)) folds into the CoA carboxyltransferase C-terminal domain.

As to quaternary structure, homodimer. The cofactor is biotin. Requires Mg(2+) as cofactor. Mn(2+) serves as cofactor.

It is found in the cytoplasm. It localises to the cytosol. It carries out the reaction hydrogencarbonate + acetyl-CoA + ATP = malonyl-CoA + ADP + phosphate + H(+). The catalysed reaction is N(6)-biotinyl-L-lysyl-[protein] + hydrogencarbonate + ATP = N(6)-carboxybiotinyl-L-lysyl-[protein] + ADP + phosphate + H(+). It participates in lipid metabolism; malonyl-CoA biosynthesis; malonyl-CoA from acetyl-CoA: step 1/1. Functionally, multifunctional enzyme that catalyzes the carboxylation of acetyl-CoA, forming malonyl-CoA, which is used in the plastid for fatty acid synthesis and in the cytosol in various biosynthetic pathways including fatty acid elongation. This Oryza sativa subsp. japonica (Rice) protein is Acetyl-CoA carboxylase 2 (ACC2).